Consider the following 558-residue polypeptide: Dihydroxy-acid dehydratase (558 aa).

C49 is a [2Fe-2S] cluster binding site. D81 contributes to the Mg(2+) binding site. Position 122 (C122) interacts with [2Fe-2S] cluster. Mg(2+) contacts are provided by D123 and K124. K124 carries the post-translational modification N6-carboxylysine. C194 serves as a coordination point for [2Fe-2S] cluster. E446 is a binding site for Mg(2+). The active-site Proton acceptor is the S472.

Belongs to the IlvD/Edd family. Homodimer. The cofactor is [2Fe-2S] cluster. Mg(2+) serves as cofactor.

The enzyme catalyses (2R)-2,3-dihydroxy-3-methylbutanoate = 3-methyl-2-oxobutanoate + H2O. It catalyses the reaction (2R,3R)-2,3-dihydroxy-3-methylpentanoate = (S)-3-methyl-2-oxopentanoate + H2O. It participates in amino-acid biosynthesis; L-isoleucine biosynthesis; L-isoleucine from 2-oxobutanoate: step 3/4. Its pathway is amino-acid biosynthesis; L-valine biosynthesis; L-valine from pyruvate: step 3/4. Functions in the biosynthesis of branched-chain amino acids. Catalyzes the dehydration of (2R,3R)-2,3-dihydroxy-3-methylpentanoate (2,3-dihydroxy-3-methylvalerate) into 2-oxo-3-methylpentanoate (2-oxo-3-methylvalerate) and of (2R)-2,3-dihydroxy-3-methylbutanoate (2,3-dihydroxyisovalerate) into 2-oxo-3-methylbutanoate (2-oxoisovalerate), the penultimate precursor to L-isoleucine and L-valine, respectively. This chain is Dihydroxy-acid dehydratase, found in Synechococcus sp. (strain RCC307).